Consider the following 310-residue polypeptide: Putative olfactory receptor 7A2 (310 aa).

Over 1 to 26 (MVKAGNETQISEFLLLGFSEKQELQP) the chain is Extracellular. A glycan (N-linked (GlcNAc...) asparagine) is linked at N6. A helical membrane pass occupies residues 27 to 47 (FLFGLFLSMYLVTVLGNLLII). The Cytoplasmic portion of the chain corresponds to 48-55 (LAAISDSC). Residues 56–76 (LHTPMYFFLSNLSFVDICFAS) traverse the membrane as a helical segment. At 77–100 (TMVPKMLVNIQTQSKVITYAGCIT) the chain is on the extracellular side. A disulfide bridge connects residues C98 and C190. The chain crosses the membrane as a helical span at residues 101–121 (QMCFFVLFIVLDSLLLTVMAY). The Cytoplasmic portion of the chain corresponds to 122–140 (DQFVAICHPLHYTVIMSPQ). Residues 141 to 161 (LCGLLVLVSWIMSVLNSMLQS) traverse the membrane as a helical segment. The Extracellular portion of the chain corresponds to 162-198 (LVTLQLSFCTDLEIPHFFCELNEMIHLACSDTFVNNM). Residues 199 to 218 (VMHFAAVLLDGGPLVGILYS) traverse the membrane as a helical segment. At 219 to 238 (YCRIVSSIRAISSTQGKYKA) the chain is on the cytoplasmic side. A helical transmembrane segment spans residues 239–259 (LSTCASHLSVVSIFYGTGLGV). Residues 260-272 (YLSSTMTQNLHST) lie on the Extracellular side of the membrane. The chain crosses the membrane as a helical span at residues 273-293 (AVASVMYTVVTPMLNPFIYSL). At 294-310 (RNKDIKGALTQFFRGKQ) the chain is on the cytoplasmic side.

This sequence belongs to the G-protein coupled receptor 1 family.

It is found in the cell membrane. Its function is as follows. Odorant receptor. In Homo sapiens (Human), this protein is Putative olfactory receptor 7A2 (OR7A2P).